The chain runs to 78 residues: MALIRKTFYFLFAVFFVLVQLPSECQAGLDFSQPFPSDEFAVCESCKLGRGKCRKECLENEKPDGNCRLNFLCCRERI.

Positions 1 to 27 (MALIRKTFYFLFAVFFVLVQLPSECQA) are cleaved as a signal peptide. 3 disulfide bridges follow: cysteine 43/cysteine 74, cysteine 53/cysteine 67, and cysteine 57/cysteine 73.

This sequence belongs to the beta-defensin family.

The protein resides in the secreted. Functionally, has antimicrobial activity. The polypeptide is Beta-defensin 105A (DEFB105A) (Pongo pygmaeus (Bornean orangutan)).